A 313-amino-acid chain; its full sequence is Tyrosine recombinase slr0733 (313 aa).

The Core-binding (CB) domain occupies 7–101; it reads NNLSGLNQNI…AIKSLVNYAR (95 aa). Residues 122-307 form the Tyr recombinase domain; it reads RDTTGVSPTS…RHQHQAQITD (186 aa). Catalysis depends on residues arginine 162, lysine 188, histidine 258, arginine 261, and histidine 285. Tyrosine 294 functions as the O-(3'-phospho-DNA)-tyrosine intermediate in the catalytic mechanism.

The protein belongs to the 'phage' integrase family.

The protein localises to the cytoplasm. Functionally, site-specific tyrosine recombinase, which acts by catalyzing the cutting and rejoining of the recombining DNA molecules. The polypeptide is Tyrosine recombinase slr0733 (Synechocystis sp. (strain ATCC 27184 / PCC 6803 / Kazusa)).